The chain runs to 367 residues: Glutamate 5-kinase (367 aa).

Lys10 is an ATP binding site. Substrate-binding residues include Ser50, Asp137, and Asn149. ATP-binding positions include 169 to 170 (TD) and 211 to 217 (TGGMSTK). A PUA domain is found at 275 to 353 (AGIITIDAGA…QDIEQVLGYE (79 aa)).

The protein belongs to the glutamate 5-kinase family.

The protein localises to the cytoplasm. It carries out the reaction L-glutamate + ATP = L-glutamyl 5-phosphate + ADP. It participates in amino-acid biosynthesis; L-proline biosynthesis; L-glutamate 5-semialdehyde from L-glutamate: step 1/2. Functionally, catalyzes the transfer of a phosphate group to glutamate to form L-glutamate 5-phosphate. The polypeptide is Glutamate 5-kinase (Pasteurella multocida (strain Pm70)).